The primary structure comprises 373 residues: Cyclin-A3-1 (373 aa).

The disordered stretch occupies residues 50–80 (AVVLKPQPAPRGGKRAASHAAEPKKPAPPPA).

It belongs to the cyclin family. Cyclin AB subfamily.

The chain is Cyclin-A3-1 (CYCA3-1) from Oryza sativa subsp. japonica (Rice).